Consider the following 179-residue polypeptide: Large ribosomal subunit protein uL6 (179 aa).

The protein belongs to the universal ribosomal protein uL6 family. In terms of assembly, part of the 50S ribosomal subunit.

This protein binds to the 23S rRNA, and is important in its secondary structure. It is located near the subunit interface in the base of the L7/L12 stalk, and near the tRNA binding site of the peptidyltransferase center. In Bifidobacterium longum (strain DJO10A), this protein is Large ribosomal subunit protein uL6.